The chain runs to 186 residues: Ribosome-recycling factor (186 aa).

The protein belongs to the RRF family.

It localises to the cytoplasm. Responsible for the release of ribosomes from messenger RNA at the termination of protein biosynthesis. May increase the efficiency of translation by recycling ribosomes from one round of translation to another. This is Ribosome-recycling factor from Paracidovorax citrulli (strain AAC00-1) (Acidovorax citrulli).